Consider the following 378-residue polypeptide: Apoptosis-inducing factor 1 (378 aa).

Residues N7–Y25 form a helical membrane-spanning segment. Residues G12–F16, R51, K56, and D283 each bind FAD.

It belongs to the FAD-dependent oxidoreductase family. FAD serves as cofactor.

It localises to the mitochondrion outer membrane. Its subcellular location is the nucleus. Putative FAD-dependent oxidoreductase involved in the resistance to cercosporin and other singlet oxygen-generating photosensitizers. Translocates from mitochondria to the nucleus under apoptotic conditions, where it degrades DNA and induces apoptosis. In Saccharomyces cerevisiae (strain ATCC 204508 / S288c) (Baker's yeast), this protein is Apoptosis-inducing factor 1 (AIF1).